Here is a 274-residue protein sequence, read N- to C-terminus: Small ribosomal subunit biogenesis GTPase RsgA (274 aa).

The CP-type G domain occupies K58–Y215. GTP-binding positions include S108–D111 and G158–T166. Zn(2+) contacts are provided by C238, C243, H245, and C252.

This sequence belongs to the TRAFAC class YlqF/YawG GTPase family. RsgA subfamily. In terms of assembly, monomer. Associates with 30S ribosomal subunit, binds 16S rRNA. The cofactor is Zn(2+).

It localises to the cytoplasm. Functionally, one of several proteins that assist in the late maturation steps of the functional core of the 30S ribosomal subunit. Helps release RbfA from mature subunits. May play a role in the assembly of ribosomal proteins into the subunit. Circularly permuted GTPase that catalyzes slow GTP hydrolysis, GTPase activity is stimulated by the 30S ribosomal subunit. This is Small ribosomal subunit biogenesis GTPase RsgA from Mycoplasmoides gallisepticum (strain R(low / passage 15 / clone 2)) (Mycoplasma gallisepticum).